Consider the following 241-residue polypeptide: Exosome complex component RRP41 homolog (241 aa).

Methionine 1 carries the N-acetylmethionine modification.

The protein belongs to the RNase PH family. As to quaternary structure, component of the RNA exosome complex. Interacts with RPP4.

The protein localises to the cytoplasm. The protein resides in the nucleus. Its subcellular location is the nucleolus. Non-catalytic component of the RNA exosome complex which has 3'-&gt;5' exoribonuclease activity and participates in a multitude of cellular RNA processing, maturation and degradation events. In vitro, is a processive phosphorolytic exonuclease and requires a single-stranded poly(A) tail on the substrate RNA for its activity. Can complement the growth defect of a yeast mutant lacking RRP41 exonuclease. Required for normal development of female gametophytes. This chain is Exosome complex component RRP41 homolog, found in Arabidopsis thaliana (Mouse-ear cress).